A 349-amino-acid polypeptide reads, in one-letter code: Insulin gene enhancer protein ISL-1 (349 aa).

2 consecutive LIM zinc-binding domains span residues 17 to 70 (CVGC…CKRD) and 79 to 133 (CAKC…RADH). The homeobox DNA-binding region spans 181–240 (TTRVRTVLNEKQLHTLRTCYAANPRPDALMKEQLVEMTGLSPRVIRVWFQNKRCKDKKRS). An LIM-binding domain (LID) region spans residues 262–291 (GTPMVAASPERHDGGLQANPVEVQSYQPPW). Residues 312-349 (VNFSEGGPGSNSTGSEVASMSSQLPDTPNSMVASPIEA) form a disordered region. A compositionally biased stretch (polar residues) spans 321–343 (SNSTGSEVASMSSQLPDTPNSMV).

As to quaternary structure, at neuronal promoters, displaces LDB1 from LHX3 LIM domain to form a ternary complex in which ISL1 contacts both LHX3 and LDB1; allosteric structural changes in the DNA binding domain of LHX3, induced by the ISL1:LHX3 interaction, may explain differences in sequence specificity of the different complexes. Interacts with LHX3. Interacts (via C-terminus) with POU4F2 (via C-terminus) isoform 1. Interacts with POU3F2. Interacts with POU4F3. Interacts (via N-terminal domain) with MLIP; the interaction represses ISL1 transactivator activity. Interacts with GCN5/KAT2A. Interactions of ISL1 with MLIP1 or KAT2A may be mutually exclusive. Ubiquitinated probably by WWP1 E3 ubiquitin ligase; ubiquitination is followed by protein degradation. Post-translationally, phosphorylated. As to expression, expressed in subsets of neurons of the adrenal medulla and dorsal root ganglion, inner nuclear and ganglion cell layers in the retina, the pineal and some regions of the brain.

Its subcellular location is the nucleus. Functionally, DNA-binding transcriptional activator. Recognizes and binds to the consensus octamer binding site 5'-ATAATTAA-3' in promoter of target genes. Plays a fundamental role in the gene regulatory network essential for retinal ganglion cell (RGC) differentiation. Cooperates with the transcription factor POU4F2 to achieve maximal levels of expression of RGC target genes and RGC fate specification in the developing retina. Involved in the specification of motor neurons in cooperation with LHX3 and LDB1. Binds to insulin gene enhancer sequences. Essential for heart development. Marker of one progenitor cell population that give rise to the outflow tract, right ventricle, a subset of left ventricular cells, and a large number of atrial cells as well, its function is required for these progenitors to contribute to the heart. Controls the expression of FGF and BMP growth factors in this cell population and is required for proliferation and survival of cells within pharyngeal foregut endoderm and adjacent splanchnic mesoderm as well as for migration of cardiac progenitors into the heart. The polypeptide is Insulin gene enhancer protein ISL-1 (ISL1) (Homo sapiens (Human)).